A 251-amino-acid chain; its full sequence is MRKEERLEEITKLINKRGTIRVTEVVERLKVSDMTVRRDLTELEGLGVLTRIHGGARSNNIFQYKEMSHEEKHSRQIEEKHYIAQKAAELVEEGDTIFLGPGTTVELLAEEINKTTLQVITNCLPVFQILSQKQSETFRVHLLGGEMRSITQSFIGEITNIVLEKMHFSKMFFSGNGVKGNEVMTSSFQEAYTQKMALGRAIEKYLLIDSSKIGKEDFTSFYQLSQLTALITDCQDDDKLQKLSKYTEIIN.

One can recognise an HTH deoR-type domain in the interval 3 to 58 (KEERLEEITKLINKRGTIRVTEVVERLKVSDMTVRRDLTELEGLGVLTRIHGGARS). The segment at residues 20-39 (IRVTEVVERLKVSDMTVRRD) is a DNA-binding region (H-T-H motif).

Its function is as follows. Repressor of the lactose catabolism operon. Galactose-6-phosphate is the inducer. This chain is Lactose phosphotransferase system repressor (lacR), found in Streptococcus mutans serotype c (strain ATCC 700610 / UA159).